The primary structure comprises 91 residues: Small ribosomal subunit protein bS16 (91 aa).

The protein belongs to the bacterial ribosomal protein bS16 family.

This chain is Small ribosomal subunit protein bS16, found in Lacticaseibacillus casei (strain BL23) (Lactobacillus casei).